We begin with the raw amino-acid sequence, 258 residues long: Imidazole glycerol phosphate synthase subunit HisF (258 aa).

Catalysis depends on residues Asp11 and Asp130.

It belongs to the HisA/HisF family. As to quaternary structure, heterodimer of HisH and HisF.

It is found in the cytoplasm. It catalyses the reaction 5-[(5-phospho-1-deoxy-D-ribulos-1-ylimino)methylamino]-1-(5-phospho-beta-D-ribosyl)imidazole-4-carboxamide + L-glutamine = D-erythro-1-(imidazol-4-yl)glycerol 3-phosphate + 5-amino-1-(5-phospho-beta-D-ribosyl)imidazole-4-carboxamide + L-glutamate + H(+). The protein operates within amino-acid biosynthesis; L-histidine biosynthesis; L-histidine from 5-phospho-alpha-D-ribose 1-diphosphate: step 5/9. Functionally, IGPS catalyzes the conversion of PRFAR and glutamine to IGP, AICAR and glutamate. The HisF subunit catalyzes the cyclization activity that produces IGP and AICAR from PRFAR using the ammonia provided by the HisH subunit. This chain is Imidazole glycerol phosphate synthase subunit HisF, found in Citrobacter koseri (strain ATCC BAA-895 / CDC 4225-83 / SGSC4696).